We begin with the raw amino-acid sequence, 216 residues long: Cytidylate kinase (216 aa).

Position 7-15 (7-15 (GPAASGKGT)) interacts with ATP.

Belongs to the cytidylate kinase family. Type 1 subfamily.

The protein localises to the cytoplasm. The enzyme catalyses CMP + ATP = CDP + ADP. The catalysed reaction is dCMP + ATP = dCDP + ADP. This Methylocella silvestris (strain DSM 15510 / CIP 108128 / LMG 27833 / NCIMB 13906 / BL2) protein is Cytidylate kinase.